The sequence spans 188 residues: Large ribosomal subunit protein uL5 (188 aa).

The protein belongs to the universal ribosomal protein uL5 family. In terms of assembly, part of the 50S ribosomal subunit; part of the 5S rRNA/L5/L18/L25 subcomplex. Contacts the 5S rRNA and the P site tRNA. Forms a bridge to the 30S subunit in the 70S ribosome.

This is one of the proteins that bind and probably mediate the attachment of the 5S RNA into the large ribosomal subunit, where it forms part of the central protuberance. In the 70S ribosome it contacts protein S13 of the 30S subunit (bridge B1b), connecting the 2 subunits; this bridge is implicated in subunit movement. Contacts the P site tRNA; the 5S rRNA and some of its associated proteins might help stabilize positioning of ribosome-bound tRNAs. The polypeptide is Large ribosomal subunit protein uL5 (Aquifex pyrophilus).